A 140-amino-acid chain; its full sequence is Small ribosomal subunit protein uS11 (140 aa).

The disordered stretch occupies residues 116–140 (GRVEDVTPIPHDGTRPKGGRRGRRV).

Belongs to the universal ribosomal protein uS11 family. As to quaternary structure, part of the 30S ribosomal subunit.

In terms of biological role, located on the platform of the 30S subunit. This chain is Small ribosomal subunit protein uS11, found in Thermococcus kodakarensis (strain ATCC BAA-918 / JCM 12380 / KOD1) (Pyrococcus kodakaraensis (strain KOD1)).